The following is a 213-amino-acid chain: Phospho-2-dehydro-3-deoxyheptonate aldolase, Tyr-sensitive (213 aa).

It belongs to the class-I DAHP synthase family.

The enzyme catalyses D-erythrose 4-phosphate + phosphoenolpyruvate + H2O = 7-phospho-2-dehydro-3-deoxy-D-arabino-heptonate + phosphate. Its pathway is metabolic intermediate biosynthesis; chorismate biosynthesis; chorismate from D-erythrose 4-phosphate and phosphoenolpyruvate: step 1/7. Functionally, stereospecific condensation of phosphoenolpyruvate (PEP) and D-erythrose-4-phosphate (E4P) giving rise to 3-deoxy-D-arabino-heptulosonate-7-phosphate (DAHP). This is Phospho-2-dehydro-3-deoxyheptonate aldolase, Tyr-sensitive (aroF) from Enterobacter agglomerans (Erwinia herbicola).